Reading from the N-terminus, the 545-residue chain is CTP synthase (545 aa).

The tract at residues 1-266 (MTTRYIFVTG…DDLVVKRFGL (266 aa)) is amidoligase domain. S14 lines the CTP pocket. S14 serves as a coordination point for UTP. ATP is bound by residues 15-20 (SLGKGI) and D72. The Mg(2+) site is built by D72 and E140. CTP is bound by residues 147-149 (DIE), 187-192 (KTKPTQ), and K223. UTP is bound by residues 187 to 192 (KTKPTQ) and K223. 239–241 (KDV) serves as a coordination point for ATP. The Glutamine amidotransferase type-1 domain maps to 291–542 (VIGMVGKYIE…IAAASAHQKR (252 aa)). An L-glutamine-binding site is contributed by G352. C379 acts as the Nucleophile; for glutamine hydrolysis in catalysis. Residues 380-383 (LGMQ), E403, and R470 each bind L-glutamine. Active-site residues include H515 and E517.

The protein belongs to the CTP synthase family. As to quaternary structure, homotetramer.

The catalysed reaction is UTP + L-glutamine + ATP + H2O = CTP + L-glutamate + ADP + phosphate + 2 H(+). The enzyme catalyses L-glutamine + H2O = L-glutamate + NH4(+). It catalyses the reaction UTP + NH4(+) + ATP = CTP + ADP + phosphate + 2 H(+). Its pathway is pyrimidine metabolism; CTP biosynthesis via de novo pathway; CTP from UDP: step 2/2. Allosterically activated by GTP, when glutamine is the substrate; GTP has no effect on the reaction when ammonia is the substrate. The allosteric effector GTP functions by stabilizing the protein conformation that binds the tetrahedral intermediate(s) formed during glutamine hydrolysis. Inhibited by the product CTP, via allosteric rather than competitive inhibition. Its function is as follows. Catalyzes the ATP-dependent amination of UTP to CTP with either L-glutamine or ammonia as the source of nitrogen. Regulates intracellular CTP levels through interactions with the four ribonucleotide triphosphates. The polypeptide is CTP synthase (Shewanella baltica (strain OS155 / ATCC BAA-1091)).